Consider the following 203-residue polypeptide: Peptide deformylase (203 aa).

C121 and H163 together coordinate Fe cation. E164 is an active-site residue. H167 serves as a coordination point for Fe cation.

It belongs to the polypeptide deformylase family. Requires Fe(2+) as cofactor.

It catalyses the reaction N-terminal N-formyl-L-methionyl-[peptide] + H2O = N-terminal L-methionyl-[peptide] + formate. Removes the formyl group from the N-terminal Met of newly synthesized proteins. Requires at least a dipeptide for an efficient rate of reaction. N-terminal L-methionine is a prerequisite for activity but the enzyme has broad specificity at other positions. In Prochlorococcus marinus (strain SARG / CCMP1375 / SS120), this protein is Peptide deformylase.